The following is a 435-amino-acid chain: Matrix remodeling-associated protein 8 (435 aa).

A signal peptide spans Met1–Leu22. Residues Tyr23–Gln337 lie on the Extracellular side of the membrane. 2 Ig-like V-type domains span residues Pro32–Thr158 and Asn156–Ser293. Residues Asn41, Asn120, Asn156, Asn245, and Asn324 are each glycosylated (N-linked (GlcNAc...) asparagine). Cys54 and Cys138 are joined by a disulfide. A disulfide bond links Cys187 and Cys273. The helical transmembrane segment at Leu338–Ile358 threads the bilayer. The Cytoplasmic portion of the chain corresponds to Thr359–Lys435.

As to quaternary structure, homodimer in cis. Does not appear to form trans-homodimers.

It is found in the cell membrane. Functionally, transmembrane protein which can modulate activity of various signaling pathways, probably via binding to integrin ITGAV:ITGB3. Mediates heterophilic cell-cell interactions in vitro. This Xenopus laevis (African clawed frog) protein is Matrix remodeling-associated protein 8 (mxra8).